We begin with the raw amino-acid sequence, 95 residues long: Large ribosomal subunit protein bL28 (95 aa).

Positions M1 to Q28 are disordered.

This sequence belongs to the bacterial ribosomal protein bL28 family.

The protein is Large ribosomal subunit protein bL28 of Magnetococcus marinus (strain ATCC BAA-1437 / JCM 17883 / MC-1).